A 103-amino-acid polypeptide reads, in one-letter code: Co-chaperonin GroES (103 aa).

Belongs to the GroES chaperonin family. As to quaternary structure, heptamer of 7 subunits arranged in a ring. Interacts with the chaperonin GroEL.

It is found in the cytoplasm. Its function is as follows. Together with the chaperonin GroEL, plays an essential role in assisting protein folding. The GroEL-GroES system forms a nano-cage that allows encapsulation of the non-native substrate proteins and provides a physical environment optimized to promote and accelerate protein folding. GroES binds to the apical surface of the GroEL ring, thereby capping the opening of the GroEL channel. This is Co-chaperonin GroES from Prochlorococcus marinus (strain MIT 9312).